Here is a 328-residue protein sequence, read N- to C-terminus: Sin3 histone deacetylase corepressor complex component SDS3 (328 aa).

Residues 1 to 16 show a composition bias toward low complexity; sequence MSAAGLLAPAPAQAGA. A disordered region spans residues 1 to 65; sequence MSAAGLLAPA…DLAKHDEEDY (65 aa). S2 carries the N-acetylserine modification. Positions 2–170 are mediates interaction with USP17L2; the sequence is SAAGLLAPAP…IENEKLTMEL (169 aa). 2 stretches are compositionally biased toward acidic residues: residues 23–37 and 45–54; these read YPEE…EEDE and SDEDTEDASE. Phosphoserine is present on residues S32 and S45. T49 is subject to Phosphothreonine. S53 is modified (phosphoserine). Basic and acidic residues predominate over residues 56–65; the sequence is DLAKHDEEDY. Residues 66–171 adopt a coiled-coil conformation; the sequence is VEMKEQMYQD…ENEKLTMELT (106 aa). Residues K69, K178, and K201 each participate in a glycyl lysine isopeptide (Lys-Gly) (interchain with G-Cter in SUMO2) cross-link. Residues 188–226 form a sin3 interaction domain (SID) region; sequence RPNDPVPIPDKRRKPAPAQLNYLLTDEQIMEDLRTLNKL. The segment at 226–252 is disordered; sequence LKSPKRPASPSSPEHLPATPAESPAQR. Residues S228, S234, and S237 each carry the phosphoserine modification. T244 is modified (phosphothreonine).

Belongs to the SDS3 family. As to quaternary structure, interacts with HCFC1. Homodimer. Component of the SIN3 histone deacetylase (HDAC) corepressor complex. Interacts with SIN3A. Interaction with SIN3B enhances the interaction between SIN3B and HDAC1 to form a complex. Component of a mSin3A corepressor complex that contains SIN3A, SAP130, SUDS3/SAP45, ARID4B/SAP180, HDAC1 and HDAC2. Interacts with USP17L2; the interaction is direct. Interacts with FOXK2. In terms of processing, polyubiquitinated. 'Lys-63'-polyubiquitinated SUDS3 positively regulates histone deacetylation. Regulated through deubiquitination by USP17L2/USP17 that cleaves 'Lys-63'-linked ubiquitin chains.

The protein resides in the nucleus. Functionally, regulatory protein which represses transcription and augments histone deacetylase activity of HDAC1. May have a potential role in tumor suppressor pathways through regulation of apoptosis. May function in the assembly and/or enzymatic activity of the mSin3A corepressor complex or in mediating interactions between the complex and other regulatory complexes. This Pongo abelii (Sumatran orangutan) protein is Sin3 histone deacetylase corepressor complex component SDS3 (SUDS3).